Consider the following 139-residue polypeptide: Large ribosomal subunit protein bL20 (139 aa).

It belongs to the bacterial ribosomal protein bL20 family.

Functionally, binds directly to 23S ribosomal RNA and is necessary for the in vitro assembly process of the 50S ribosomal subunit. It is not involved in the protein synthesizing functions of that subunit. The chain is Large ribosomal subunit protein bL20 from Leuconostoc citreum (strain KM20).